Consider the following 279-residue polypeptide: Probable endonuclease 4 (279 aa).

Zn(2+) is bound by residues H66, H106, E142, D175, H178, H212, D225, H227, and E257.

The protein belongs to the AP endonuclease 2 family. Zn(2+) serves as cofactor.

It carries out the reaction Endonucleolytic cleavage to 5'-phosphooligonucleotide end-products.. Functionally, endonuclease IV plays a role in DNA repair. It cleaves phosphodiester bonds at apurinic or apyrimidinic (AP) sites, generating a 3'-hydroxyl group and a 5'-terminal sugar phosphate. This chain is Probable endonuclease 4, found in Moorella thermoacetica (strain ATCC 39073 / JCM 9320).